We begin with the raw amino-acid sequence, 576 residues long: K(+)/H(+) antiporter NhaP2 (576 aa).

13 helical membrane passes run 6 to 26 (INSFFLIGALLTAVSVLLSPM), 34 to 54 (ILLIFLAVGILAGEDGPGGIL), 58 to 78 (YSTAYLVSNLALAIILLDGGM), 87 to 107 (VALWPALSLATFGVAITTSIT), 109 to 129 (MMAAWLFDLHWLQGLLVGAIV), 163 to 183 (PMAVFLTVTLIAILANVDTEM), 185 to 205 (FSFMFISFIKQFGLGICLGLG), 219 to 239 (LADGLYSILVLSGGLIIYAAS), 242 to 262 (LGGSGILSIYLVGLFLGNKPT), 271 to 291 (VLDGMTWVSQIGMFLVLGLLL), 299 to 319 (ILIPGFALAFGMILFARPVAV), 335 to 355 (WFISWVGLRGAVPIILAVFPM), and 359 to 379 (LPGAQLYFNLAFFVVLVSLLV). One can recognise an RCK C-terminal domain in the interval 405-486 (SGVEIYPSSE…LEALSNLFSQ (82 aa)).

It belongs to the monovalent cation:proton antiporter 1 (CPA1) transporter (TC 2.A.36) family. NhaP2 subfamily.

The protein localises to the cell inner membrane. It carries out the reaction K(+)(in) + H(+)(out) = K(+)(out) + H(+)(in). Its function is as follows. K(+)/H(+) antiporter that extrudes potassium in exchange for external protons and maintains the internal concentration of potassium under toxic levels. The protein is K(+)/H(+) antiporter NhaP2 of Shewanella baltica (strain OS223).